The chain runs to 453 residues: Bifunctional protein GlmU (453 aa).

Residues 1–225 (MNIVILAAGT…EWETLGVNSK (225 aa)) form a pyrophosphorylase region. UDP-N-acetyl-alpha-D-glucosamine-binding positions include 6–9 (LAAG), Lys-20, Gln-71, 76–77 (GT), 98–100 (YGD), Gly-135, Glu-150, Asn-165, and Asn-223. Residue Asp-100 coordinates Mg(2+). Asn-223 is a Mg(2+) binding site. The tract at residues 226 to 246 (QQLAELERIHQRNVADDLLVA) is linker. Positions 247–453 (GVTIADPARI…GYVRPTKKKS (207 aa)) are N-acetyltransferase. UDP-N-acetyl-alpha-D-glucosamine is bound by residues Arg-329 and Lys-347. The active-site Proton acceptor is the His-359. UDP-N-acetyl-alpha-D-glucosamine contacts are provided by Tyr-362 and Asn-373. Acetyl-CoA contacts are provided by residues Ala-376, 382–383 (NY), Ser-401, and Ala-419.

It in the N-terminal section; belongs to the N-acetylglucosamine-1-phosphate uridyltransferase family. In the C-terminal section; belongs to the transferase hexapeptide repeat family. Homotrimer. It depends on Mg(2+) as a cofactor.

It is found in the cytoplasm. The catalysed reaction is alpha-D-glucosamine 1-phosphate + acetyl-CoA = N-acetyl-alpha-D-glucosamine 1-phosphate + CoA + H(+). It carries out the reaction N-acetyl-alpha-D-glucosamine 1-phosphate + UTP + H(+) = UDP-N-acetyl-alpha-D-glucosamine + diphosphate. It functions in the pathway nucleotide-sugar biosynthesis; UDP-N-acetyl-alpha-D-glucosamine biosynthesis; N-acetyl-alpha-D-glucosamine 1-phosphate from alpha-D-glucosamine 6-phosphate (route II): step 2/2. The protein operates within nucleotide-sugar biosynthesis; UDP-N-acetyl-alpha-D-glucosamine biosynthesis; UDP-N-acetyl-alpha-D-glucosamine from N-acetyl-alpha-D-glucosamine 1-phosphate: step 1/1. Its pathway is bacterial outer membrane biogenesis; LPS lipid A biosynthesis. Functionally, catalyzes the last two sequential reactions in the de novo biosynthetic pathway for UDP-N-acetylglucosamine (UDP-GlcNAc). The C-terminal domain catalyzes the transfer of acetyl group from acetyl coenzyme A to glucosamine-1-phosphate (GlcN-1-P) to produce N-acetylglucosamine-1-phosphate (GlcNAc-1-P), which is converted into UDP-GlcNAc by the transfer of uridine 5-monophosphate (from uridine 5-triphosphate), a reaction catalyzed by the N-terminal domain. This Paraburkholderia phymatum (strain DSM 17167 / CIP 108236 / LMG 21445 / STM815) (Burkholderia phymatum) protein is Bifunctional protein GlmU.